Consider the following 79-residue polypeptide: Acyl carrier protein (79 aa).

A Carrier domain is found at 2-77 (SDIEARVRKI…HAIDYIKSNA (76 aa)). An O-(pantetheine 4'-phosphoryl)serine modification is found at S37.

This sequence belongs to the acyl carrier protein (ACP) family. Post-translationally, 4'-phosphopantetheine is transferred from CoA to a specific serine of apo-ACP by AcpS. This modification is essential for activity because fatty acids are bound in thioester linkage to the sulfhydryl of the prosthetic group.

It localises to the cytoplasm. The protein operates within lipid metabolism; fatty acid biosynthesis. Its function is as follows. Carrier of the growing fatty acid chain in fatty acid biosynthesis. This Xylella fastidiosa (strain M23) protein is Acyl carrier protein.